A 222-amino-acid polypeptide reads, in one-letter code: AEFVSQNIDKNCILVDMGSTTTDIIPIVDGKAASNKTDLERLMNNELLYVGSLRTPLSFLSNKIMFKDTITNVSSEYFAITGDISLVLDKITEMDYSCDTPDGKPADKRNSLIRISKVLCSDLNQISADESINIAIEYYKILIDLILENVKKVSEKYGLKNIVITGLGEEILKDALSELTKSNEFNIISIKERYGKDVSLATPSFSVSILLKNELNAKLNRS.

The protein belongs to the MfnF family.

It carries out the reaction gamma-L-glutamyltyramine + [5-(aminomethyl)furan-3-yl]methyl diphosphate = (4-{4-[2-(gamma-L-glutamylamino)ethyl]phenoxymethyl}furan-2-yl)methanamine + diphosphate. It participates in cofactor biosynthesis; methanofuran biosynthesis. Catalyzes the condensation between 5-(aminomethyl)-3-furanmethanol diphosphate (F1-PP) and gamma-glutamyltyramine to produce APMF-Glu. The polypeptide is (4-{4-[2-(gamma-L-glutamylamino)ethyl]phenoxymethyl}furan-2-yl)methanamine synthase (Methanococcus vannielii).